Reading from the N-terminus, the 381-residue chain is Creatine kinase M-type (381 aa).

One can recognise a Phosphagen kinase N-terminal domain in the interval 11–98 (KLNYKPEEEY…FDPIIQDRHG (88 aa)). The region spanning 125-367 (YVLSSRVRTG…KLMVEMEKKL (243 aa)) is the Phosphagen kinase C-terminal domain. 128 to 132 (SSRVR) contacts ATP. Ser164 is modified (phosphoserine). Thr166 carries the phosphothreonine modification. Position 178 is a phosphoserine (Ser178). A Phosphothreonine modification is found at Thr180. His191 serves as a coordination point for ATP. At Ser199 the chain carries Phosphoserine. ATP is bound by residues Arg236 and Arg292. A phosphothreonine mark is found at Thr313 and Thr322. Residues 320–325 (RGTGGV) and Asp335 contribute to the ATP site. Residue Ser372 is modified to Phosphoserine.

It belongs to the ATP:guanido phosphotransferase family. In terms of assembly, dimer of identical or non-identical chains, which can be either B (brain type) or M (muscle type). With MM being the major form in skeletal muscle and myocardium, MB existing in myocardium, and BB existing in many tissues, especially brain.

The protein localises to the cytoplasm. It catalyses the reaction creatine + ATP = N-phosphocreatine + ADP + H(+). Its function is as follows. Reversibly catalyzes the transfer of phosphate between ATP and various phosphogens (e.g. creatine phosphate). Creatine kinase isoenzymes play a central role in energy transduction in tissues with large, fluctuating energy demands, such as skeletal muscle, heart, brain and spermatozoa. This is Creatine kinase M-type (CKM) from Canis lupus familiaris (Dog).